The chain runs to 230 residues: MMTAVKQSGVWAVLLWPYLLAVSIQLDCRDEQGNMSRCPFISQEKLLDRIIQHAELISRISEESCSLFEELFVPFPLRLQRNTVGYACITKALPIPSSKSEIQQISDKWLLQSVLTLVQSWIEPLVYLQTTLDRYDNAPDVLLNKTKWVSEKLVSLEQGVVVLIRKMLDEGTLTTTYNEQDLLQYDVLPDMLESVMRDYTLLSCFKKDAHKMEIFLKLLKCRQTDKFNCA.

Positions 1 to 23 are cleaved as a signal peptide; it reads MMTAVKQSGVWAVLLWPYLLAVS. 3 disulfide bridges follow: cysteine 28–cysteine 38, cysteine 88–cysteine 204, and cysteine 221–cysteine 229. Asparagine 34 and asparagine 144 each carry an N-linked (GlcNAc...) asparagine glycan.

It belongs to the somatotropin/prolactin family. In terms of tissue distribution, pituitary gland.

It is found in the secreted. In Solea senegalensis (Senegalese sole), this protein is Somatolactin.